The primary structure comprises 235 residues: Class B acid phosphatase (235 aa).

The first 22 residues, 1-22, serve as a signal peptide directing secretion; the sequence is MKNLVKLSLIAMLTAATLPAMA. The active-site Nucleophile is Asp-67. Residues Asp-67 and Asp-69 each contribute to the Mg(2+) site. Asp-69 (proton donor) is an active-site residue. Substrate contacts are provided by residues 135 to 136 and Lys-175; that span reads TG. Asp-190 contributes to the Mg(2+) binding site.

This sequence belongs to the class B bacterial acid phosphatase family. As to quaternary structure, homotetramer. It depends on Mg(2+) as a cofactor.

It is found in the periplasm. It carries out the reaction a phosphate monoester + H2O = an alcohol + phosphate. Dephosphorylates several organic phosphate monoesters. Also has a phosphotransferase activity catalyzing the transfer of low-energy phosphate groups from organic phosphate monoesters to free hydroxyl groups of various organic compounds. In Aggregatibacter actinomycetemcomitans serotype C (strain D11S-1) (Actinobacillus actinomycetemcomitans), this protein is Class B acid phosphatase.